Reading from the N-terminus, the 420-residue chain is Deoxyribodipyrimidine photo-lyase (420 aa).

In terms of domain architecture, Photolyase/cryptochrome alpha/beta spans 2–124; that stretch reads GPLLVWHRGD…PLHLLPAPHL (123 aa). Positions 147-176 are disordered; it reads APPLPPPEALPKGPEEGEIPREDPGLPLPE. A compositionally biased stretch (basic and acidic residues) spans 159 to 170; that stretch reads GPEEGEIPREDP. Tyr-197 is an FAD binding site. Residue Arg-201 participates in DNA binding. FAD-binding positions include 209-213, Trp-241, Arg-248, Asn-310, and 341-343; these read GSRLS and DGD. Interaction with DNA regions lie at residues 244 to 251 and 310 to 311; these read ELLWRDFS and NR. Gln-373 is a DNA binding site.

Belongs to the DNA photolyase class-1 family. Monomer. FAD is required as a cofactor.

The enzyme catalyses cyclobutadipyrimidine (in DNA) = 2 pyrimidine residues (in DNA).. In terms of biological role, involved in repair of UV radiation-induced DNA damage. Catalyzes the light-dependent monomerization (300-600 nm) of cyclobutyl pyrimidine dimers (in cis-syn configuration), which are formed between adjacent bases on the same DNA strand upon exposure to ultraviolet radiation. The chain is Deoxyribodipyrimidine photo-lyase (phr) from Thermus thermophilus (strain ATCC 27634 / DSM 579 / HB8).